A 540-amino-acid polypeptide reads, in one-letter code: GMP synthase [glutamine-hydrolyzing] (540 aa).

The region spanning 26-216 is the Glutamine amidotransferase type-1 domain; the sequence is IIIILDFGSQ…VYHICECEPT (191 aa). The active-site Nucleophile is the cysteine 103. Residues histidine 190 and glutamate 192 contribute to the active site. Residues 217–415 form the GMPS ATP-PPase domain; it reads WTTAAFVEEA…VGLPEEIVQR (199 aa). Residue 244–250 coordinates ATP; it reads SGGVDSS.

In terms of assembly, homodimer.

It carries out the reaction XMP + L-glutamine + ATP + H2O = GMP + L-glutamate + AMP + diphosphate + 2 H(+). The protein operates within purine metabolism; GMP biosynthesis; GMP from XMP (L-Gln route): step 1/1. Its function is as follows. Catalyzes the synthesis of GMP from XMP. This chain is GMP synthase [glutamine-hydrolyzing], found in Trichormus variabilis (strain ATCC 29413 / PCC 7937) (Anabaena variabilis).